Consider the following 217-residue polypeptide: Flagellar L-ring protein 1 (217 aa).

The first 16 residues, 1–16, serve as a signal peptide directing secretion; sequence MTLARLAPLAALLLAA. A lipid anchor (N-palmitoyl cysteine) is attached at Cys-17. The S-diacylglycerol cysteine moiety is linked to residue Cys-17.

Belongs to the FlgH family. The basal body constitutes a major portion of the flagellar organelle and consists of four rings (L,P,S, and M) mounted on a central rod.

The protein localises to the cell outer membrane. The protein resides in the bacterial flagellum basal body. In terms of biological role, assembles around the rod to form the L-ring and probably protects the motor/basal body from shearing forces during rotation. The protein is Flagellar L-ring protein 1 of Chromobacterium violaceum (strain ATCC 12472 / DSM 30191 / JCM 1249 / CCUG 213 / NBRC 12614 / NCIMB 9131 / NCTC 9757 / MK).